The chain runs to 765 residues: Single-minded homolog 1 (765 aa).

Residues 1–53 enclose the bHLH domain; sequence MKEKSKNAARTRREKENSEFYELAKLLPLPSAITSQLDKASIIRLTTSYLKMR. PAS domains follow at residues 77 to 147 and 218 to 288; these read GREL…QPYH and PPSA…LVKG. A PAC domain is found at 292 to 335; that stretch reads TKYYRFLAKQGGWVWVQSYATIVHNSRSSRPHCIVSVNYVLTDT. Residues 336 to 765 enclose the Single-minded C-terminal domain; it reads EYKGLQLSLD…GTSVIITNGS (430 aa). Low complexity-rich tracts occupy residues 352 to 365 and 373 to 385; these read PTFS…PTIS and SRLS…SRTS. 2 disordered regions span residues 352-428 and 527-560; these read PTFS…PGSQ and WDED…PHEP. Positions 368–387 match the Nuclear localization signal motif; it reads RKGAKSRLSSSKSKSRTSPY. Residues 394 to 404 show a composition bias toward basic and acidic residues; sequence HTERSESDHDS.

In terms of assembly, efficient DNA binding requires dimerization with another bHLH protein. Heterodimer; forms a heterodimer with ARNT, ARNT2. As to expression, detected in lung, skeletal muscle and kidney. During fetal development it is found in the CNS, developing kidney, mesodermal and endodermal tissues, including developing somites, mesonephric duct, and foregut.

The protein resides in the nucleus. Its function is as follows. Transcriptional factor that may have pleiotropic effects during embryogenesis and in the adult. The polypeptide is Single-minded homolog 1 (Sim1) (Mus musculus (Mouse)).